A 340-amino-acid chain; its full sequence is NADPH dehydrogenase (340 aa).

FMN is bound at residue 23–26; it reads SPMC. Y28 lines the substrate pocket. Residues A60 and Q102 each coordinate FMN. 164–167 is a binding site for substrate; that stretch reads HAAH. FMN-binding positions include R215 and 307–308; that span reads GR.

Belongs to the NADH:flavin oxidoreductase/NADH oxidase family. NamA subfamily. As to quaternary structure, homotetramer. It depends on FMN as a cofactor.

The enzyme catalyses A + NADPH + H(+) = AH2 + NADP(+). In terms of biological role, catalyzes the reduction of the double bond of an array of alpha,beta-unsaturated aldehydes and ketones. It also reduces the nitro group of nitroester and nitroaromatic compounds. It could have a role in detoxification processes. In Geobacillus thermodenitrificans (strain NG80-2), this protein is NADPH dehydrogenase.